Reading from the N-terminus, the 92-residue chain is UPF0223 protein SPCG_1392 (92 aa).

Belongs to the UPF0223 family.

The chain is UPF0223 protein SPCG_1392 from Streptococcus pneumoniae (strain CGSP14).